Here is a 141-residue protein sequence, read N- to C-terminus: Hemoglobin subunit alpha (141 aa).

Residues 1-141 (VLSDEDKTNV…VSTVLTSKYR (141 aa)) form the Globin domain. S3 carries the post-translational modification Phosphoserine. Residue K7 is modified to N6-succinyllysine. T8 bears the Phosphothreonine mark. K11 is modified (N6-succinyllysine). K16 bears the N6-acetyllysine; alternate mark. Position 16 is an N6-succinyllysine; alternate (K16). Position 24 is a phosphotyrosine (Y24). The residue at position 35 (S35) is a Phosphoserine. K40 is modified (N6-succinyllysine). At S49 the chain carries Phosphoserine. An O2-binding site is contributed by H58. Position 87 (H87) interacts with heme b. A Phosphoserine modification is found at S102. Position 108 is a phosphothreonine (T108). Residues S124 and S131 each carry the phosphoserine modification. A phosphothreonine mark is found at T134 and T137. The residue at position 138 (S138) is a Phosphoserine.

Belongs to the globin family. Heterotetramer of two alpha chains and two beta chains. As to expression, red blood cells.

In terms of biological role, involved in oxygen transport from the lung to the various peripheral tissues. Its function is as follows. Hemopressin acts as an antagonist peptide of the cannabinoid receptor CNR1. Hemopressin-binding efficiently blocks cannabinoid receptor CNR1 and subsequent signaling. This chain is Hemoglobin subunit alpha (HBA), found in Trichechus inunguis (Amazon manatee).